The following is a 114-amino-acid chain: Phosphoribosyl-AMP cyclohydrolase (114 aa).

Asp-80 provides a ligand contact to Mg(2+). Zn(2+) is bound at residue Cys-81. Asp-82 and Asp-84 together coordinate Mg(2+). 2 residues coordinate Zn(2+): Cys-97 and Cys-104.

The protein belongs to the PRA-CH family. As to quaternary structure, homodimer. It depends on Mg(2+) as a cofactor. Zn(2+) serves as cofactor.

The protein resides in the cytoplasm. It carries out the reaction 1-(5-phospho-beta-D-ribosyl)-5'-AMP + H2O = 1-(5-phospho-beta-D-ribosyl)-5-[(5-phospho-beta-D-ribosylamino)methylideneamino]imidazole-4-carboxamide. It functions in the pathway amino-acid biosynthesis; L-histidine biosynthesis; L-histidine from 5-phospho-alpha-D-ribose 1-diphosphate: step 3/9. Functionally, catalyzes the hydrolysis of the adenine ring of phosphoribosyl-AMP. In Rhodococcus jostii (strain RHA1), this protein is Phosphoribosyl-AMP cyclohydrolase.